Here is a 211-residue protein sequence, read N- to C-terminus: MTIGVIGRKCGMTRIFTEEGVSIPVTVIEIEPNRVTQFKTEETDGYRAVQVTVGERRASRVTAAQAGHFAKANVAAGRGVWEFRLEEGDFQAGDLIKAELFTAGQLVDVTGQSKGKGFAGTIKRWNFRGQDNTHGNSVSHRVPGSIGQCQTPGRVFKGKKMSGHMGAERVTVQSLEVVRVDAERNLLLIKGAVPGATGGDVVVRPAVKARG.

N5-methylglutamine is present on Gln-150.

Belongs to the universal ribosomal protein uL3 family. In terms of assembly, part of the 50S ribosomal subunit. Forms a cluster with proteins L14 and L19. Methylated by PrmB.

Its function is as follows. One of the primary rRNA binding proteins, it binds directly near the 3'-end of the 23S rRNA, where it nucleates assembly of the 50S subunit. This chain is Large ribosomal subunit protein uL3, found in Pseudomonas putida (strain GB-1).